A 145-amino-acid chain; its full sequence is Maximins 3/H3 type 2 (145 aa).

A signal peptide spans 1–18 (MNFKYIVAVSFLIASAYA). 2 consecutive propeptides follow at residues 19–43 (RSVQ…LREI) and 74–124 (RTAE…KEKR). Position 144 is an isoleucine amide (Ile-144).

Belongs to the bombinin family. As to expression, expressed by the skin glands.

It localises to the secreted. Functionally, maximin-3 shows antibacterial activity against both Gram-positive and Gram-negative bacteria. It also shows antimicrobial activity against the fungus C.albicans, but not against A.flavus nor P.uticale. It has little hemolytic activity. It possess a significant cytotoxicity against tumor cell lines. It possess a significant anti-HIV activity. It shows high spermicidal activity. Maximin-H3 shows antibacterial activity against both Gram-positive and Gram-negative bacteria. It also shows antimicrobial activity against the fungus C.albicans. Shows strong hemolytic activity. The sequence is that of Maximins 3/H3 type 2 from Bombina maxima (Giant fire-bellied toad).